A 173-amino-acid chain; its full sequence is uncharacterized protein (173 aa).

Disordered regions lie at residues methionine 1–alanine 23 and threonine 48–arginine 173. Positions glycine 49–proline 60 are enriched in low complexity. Pro residues predominate over residues proline 70–leucine 83. Positions proline 123–alanine 136 are enriched in low complexity.

This is an uncharacterized protein from Homo sapiens (Human).